We begin with the raw amino-acid sequence, 406 residues long: Putative F-box protein At5g38270 (406 aa).

An F-box domain is found at 20–67 (HDWSKLCPDILRSILESLSSTDFHRAKTVCSDWYSNWKTCVKPLCPWR).

The protein is Putative F-box protein At5g38270 of Arabidopsis thaliana (Mouse-ear cress).